Consider the following 170-residue polypeptide: Large ribosomal subunit protein uL6m (170 aa).

The protein belongs to the universal ribosomal protein uL6 family.

The protein localises to the mitochondrion. The protein is Large ribosomal subunit protein uL6m (mrpl6) of Dictyostelium discoideum (Social amoeba).